The sequence spans 763 residues: Xaa-Pro dipeptidyl-peptidase (763 aa).

Catalysis depends on charge relay system residues S348, D468, and H498.

It belongs to the peptidase S15 family. As to quaternary structure, homodimer.

The protein localises to the cytoplasm. The catalysed reaction is Hydrolyzes Xaa-Pro-|- bonds to release unblocked, N-terminal dipeptides from substrates including Ala-Pro-|-p-nitroanilide and (sequentially) Tyr-Pro-|-Phe-Pro-|-Gly-Pro-|-Ile.. In terms of biological role, removes N-terminal dipeptides sequentially from polypeptides having unsubstituted N-termini provided that the penultimate residue is proline. The protein is Xaa-Pro dipeptidyl-peptidase (pepX) of Lactococcus lactis subsp. cremoris (Streptococcus cremoris).